The chain runs to 913 residues: Valine--tRNA ligase (913 aa).

The 'HIGH' region signature appears at 48 to 58 (PNVTGSLHMGH). A 'KMSKS' region motif is present at residues 541–545 (KMSKS). Lys544 serves as a coordination point for ATP. Residues 839-907 (VVDLEALVSK…IEHRLQSLGV (69 aa)) are a coiled coil.

This sequence belongs to the class-I aminoacyl-tRNA synthetase family. ValS type 1 subfamily. In terms of assembly, monomer.

Its subcellular location is the cytoplasm. It catalyses the reaction tRNA(Val) + L-valine + ATP = L-valyl-tRNA(Val) + AMP + diphosphate. Functionally, catalyzes the attachment of valine to tRNA(Val). As ValRS can inadvertently accommodate and process structurally similar amino acids such as threonine, to avoid such errors, it has a 'posttransfer' editing activity that hydrolyzes mischarged Thr-tRNA(Val) in a tRNA-dependent manner. In Thermosynechococcus vestitus (strain NIES-2133 / IAM M-273 / BP-1), this protein is Valine--tRNA ligase.